The following is a 60-amino-acid chain: UPF0291 protein Nther_1806 (60 aa).

It belongs to the UPF0291 family.

The protein resides in the cytoplasm. The protein is UPF0291 protein Nther_1806 of Natranaerobius thermophilus (strain ATCC BAA-1301 / DSM 18059 / JW/NM-WN-LF).